A 480-amino-acid chain; its full sequence is M-phase inducer phosphatase cdc-25.2 (480 aa).

A compositionally biased stretch (polar residues) spans Met-1–Glu-20. Residues Met-1–Ser-35 are disordered. Residues Phe-243–Ile-349 enclose the Rhodanese domain. Positions Thr-411–Pro-452 are disordered.

It belongs to the MPI phosphatase family.

It catalyses the reaction O-phospho-L-tyrosyl-[protein] + H2O = L-tyrosyl-[protein] + phosphate. In terms of biological role, required for intestinal cell division following the 16E cell stage of embryogenesis. Regulates intestinal cell divisions and binucleations probably by modulating the activity of the cell cycle regulator wee-1.3 and by activating the cdk-1/cyb-1 complex. Plays a role in male tail development, via regulation of the cell divisions of the ray precursor cell lineages, perhaps acting together with cell cycle regulators cyl-1, cdk-1, cyb-3, and cyd-1. This chain is M-phase inducer phosphatase cdc-25.2, found in Caenorhabditis elegans.